Here is a 317-residue protein sequence, read N- to C-terminus: Protoheme IX farnesyltransferase (317 aa).

Transmembrane regions (helical) follow at residues 44 to 64 (IGLILLTLLGGWMGAAAANTF), 93 to 113 (HASVFAWTLTVVSFLWLWVLC), 116 to 136 (VLAGLFILLTIFFYIFVYTKY), 143 to 163 (LNIVWGGAAGCMPVVVGWAVI), 178 to 198 (AIVLFMVIFFWTPPHTWALAM), 221 to 241 (VTRQIVWYTVATVLTTFLLIP), 243 to 263 (ASWIHAIIAVVSGVWFLVMAV), and 288 to 308 (LAVYFVGLSIDAVLGWETIGG).

It belongs to the UbiA prenyltransferase family. Protoheme IX farnesyltransferase subfamily.

It is found in the cell membrane. The catalysed reaction is heme b + (2E,6E)-farnesyl diphosphate + H2O = Fe(II)-heme o + diphosphate. Its pathway is porphyrin-containing compound metabolism; heme O biosynthesis; heme O from protoheme: step 1/1. Converts heme B (protoheme IX) to heme O by substitution of the vinyl group on carbon 2 of heme B porphyrin ring with a hydroxyethyl farnesyl side group. In Corynebacterium diphtheriae (strain ATCC 700971 / NCTC 13129 / Biotype gravis), this protein is Protoheme IX farnesyltransferase.